We begin with the raw amino-acid sequence, 1104 residues long: Carbamoyl phosphate synthase large chain (1104 aa).

The carboxyphosphate synthetic domain stretch occupies residues 1–402 (MPRRTDLKSV…ALQKALRSTE (402 aa)). ATP contacts are provided by Arg-129, Arg-169, Gly-175, Gly-176, Glu-208, Ile-210, Glu-215, Gly-241, Val-242, His-243, Gln-285, and Glu-299. An ATP-grasp 1 domain is found at 133-328 (KGVVERCGAE…IAKIAARLAV (196 aa)). Gln-285, Glu-299, and Asn-301 together coordinate Mg(2+). Residues Gln-285, Glu-299, and Asn-301 each contribute to the Mn(2+) site. Residues 403-547 (KRGATFSWAG…YSSYDEEDET (145 aa)) form an oligomerization domain region. Positions 548–948 (RPREKAAIVI…AFGKSQTAAY (401 aa)) are carbamoyl phosphate synthetic domain. One can recognise an ATP-grasp 2 domain in the interval 676–867 (GQVLERAGLV…LAKAAARLMA (192 aa)). Arg-712, Arg-751, Leu-753, Glu-758, Gly-783, Ile-784, His-785, Ser-786, Gln-826, and Glu-838 together coordinate ATP. Positions 826, 838, and 840 each coordinate Mg(2+). 3 residues coordinate Mn(2+): Gln-826, Glu-838, and Asn-840. The MGS-like domain maps to 949–1099 (GGLPTAGTAF…QEHTARLNAA (151 aa)). Positions 949 to 1104 (GGLPTAGTAF…RLNAAWEGRA (156 aa)) are allosteric domain.

The protein belongs to the CarB family. As to quaternary structure, composed of two chains; the small (or glutamine) chain promotes the hydrolysis of glutamine to ammonia, which is used by the large (or ammonia) chain to synthesize carbamoyl phosphate. Tetramer of heterodimers (alpha,beta)4. Mg(2+) serves as cofactor. It depends on Mn(2+) as a cofactor.

It carries out the reaction hydrogencarbonate + L-glutamine + 2 ATP + H2O = carbamoyl phosphate + L-glutamate + 2 ADP + phosphate + 2 H(+). It catalyses the reaction hydrogencarbonate + NH4(+) + 2 ATP = carbamoyl phosphate + 2 ADP + phosphate + 2 H(+). It participates in amino-acid biosynthesis; L-arginine biosynthesis; carbamoyl phosphate from bicarbonate: step 1/1. Its pathway is pyrimidine metabolism; UMP biosynthesis via de novo pathway; (S)-dihydroorotate from bicarbonate: step 1/3. Its function is as follows. Large subunit of the glutamine-dependent carbamoyl phosphate synthetase (CPSase). CPSase catalyzes the formation of carbamoyl phosphate from the ammonia moiety of glutamine, carbonate, and phosphate donated by ATP, constituting the first step of 2 biosynthetic pathways, one leading to arginine and/or urea and the other to pyrimidine nucleotides. The large subunit (synthetase) binds the substrates ammonia (free or transferred from glutamine from the small subunit), hydrogencarbonate and ATP and carries out an ATP-coupled ligase reaction, activating hydrogencarbonate by forming carboxy phosphate which reacts with ammonia to form carbamoyl phosphate. The chain is Carbamoyl phosphate synthase large chain from Kineococcus radiotolerans (strain ATCC BAA-149 / DSM 14245 / SRS30216).